We begin with the raw amino-acid sequence, 752 residues long: Protein WEAK CHLOROPLAST MOVEMENT UNDER BLUE LIGHT-like 2 (752 aa).

Phosphoserine is present on serine 143. Coiled coils occupy residues 186 to 557 and 596 to 651; these read ERRK…SRAS and ELSK…KEAM. Residues 476–495 are disordered; that stretch reads KHDLSETRQRNREDTREEKC. The span at 653-675 shows a compositional bias: basic and acidic residues; it reads KVEKARDGKVGMDHELRKWRSDN. The interval 653-733 is disordered; that stretch reads KVEKARDGKV…ETETKKKKKR (81 aa). A compositionally biased stretch (polar residues) spans 690–723; it reads KSKSALHQPTTFTFGEQASSSNVTPQASSSNVTP.

It belongs to the WEB family.

The chain is Protein WEAK CHLOROPLAST MOVEMENT UNDER BLUE LIGHT-like 2 (WEL2) from Arabidopsis thaliana (Mouse-ear cress).